We begin with the raw amino-acid sequence, 81 residues long: Photosystem I iron-sulfur center (81 aa).

4Fe-4S ferredoxin-type domains follow at residues 2–31 (SHTV…MVPW) and 39–68 (IASS…IRVY). [4Fe-4S] cluster-binding residues include Cys11, Cys14, Cys17, Cys21, Cys48, Cys51, Cys54, and Cys58.

The cyanobacterial PSI reaction center is composed of one copy each of PsaA,B,C,D,E,F,I,J,K,L,M and X, and forms trimeric complexes. [4Fe-4S] cluster is required as a cofactor.

It localises to the cellular thylakoid membrane. It carries out the reaction reduced [plastocyanin] + hnu + oxidized [2Fe-2S]-[ferredoxin] = oxidized [plastocyanin] + reduced [2Fe-2S]-[ferredoxin]. Functionally, apoprotein for the two 4Fe-4S centers FA and FB of photosystem I (PSI); essential for photochemical activity. FB is the terminal electron acceptor of PSI, donating electrons to ferredoxin. The C-terminus interacts with PsaA/B/D and helps assemble the protein into the PSI complex. Required for binding of PsaD and PsaE to PSI. PSI is a plastocyanin/cytochrome c6-ferredoxin oxidoreductase, converting photonic excitation into a charge separation, which transfers an electron from the donor P700 chlorophyll pair to the spectroscopically characterized acceptors A0, A1, FX, FA and FB in turn. The polypeptide is Photosystem I iron-sulfur center (Mastigocladus laminosus (Fischerella sp.)).